The primary structure comprises 317 residues: Thymidylate synthase (317 aa).

Residues Arg-24 and 179–180 each bind dUMP; that span reads RR. Cys-199 (nucleophile) is an active-site residue. DUMP is bound by residues 219 to 222, Asn-230, and 260 to 262; these read RSAD and HIY. A (6R)-5,10-methylene-5,6,7,8-tetrahydrofolate-binding site is contributed by Asp-222. Ala-316 lines the (6R)-5,10-methylene-5,6,7,8-tetrahydrofolate pocket.

Belongs to the thymidylate synthase family. Bacterial-type ThyA subfamily. Homodimer.

The protein resides in the cytoplasm. The catalysed reaction is dUMP + (6R)-5,10-methylene-5,6,7,8-tetrahydrofolate = 7,8-dihydrofolate + dTMP. Its pathway is pyrimidine metabolism; dTTP biosynthesis. Functionally, catalyzes the reductive methylation of 2'-deoxyuridine-5'-monophosphate (dUMP) to 2'-deoxythymidine-5'-monophosphate (dTMP) while utilizing 5,10-methylenetetrahydrofolate (mTHF) as the methyl donor and reductant in the reaction, yielding dihydrofolate (DHF) as a by-product. This enzymatic reaction provides an intracellular de novo source of dTMP, an essential precursor for DNA biosynthesis. In Oceanobacillus iheyensis (strain DSM 14371 / CIP 107618 / JCM 11309 / KCTC 3954 / HTE831), this protein is Thymidylate synthase.